Here is a 126-residue protein sequence, read N- to C-terminus: MARIAGVDLPRDKRVEVALTYVYGIGRSRAAETLANTGVNPDTRVYQLTEEELVKLREWIDANYKVEGDLRREVAADIRRKIEIGCYQGIRHRRGLPVRGQRTQTNARTRKGKKKTVAGKKKAGRK.

The interval 95 to 126 is disordered; that stretch reads GLPVRGQRTQTNARTRKGKKKTVAGKKKAGRK. Basic residues predominate over residues 108–126; it reads RTRKGKKKTVAGKKKAGRK.

The protein belongs to the universal ribosomal protein uS13 family. In terms of assembly, part of the 30S ribosomal subunit. Forms a loose heterodimer with protein S19. Forms two bridges to the 50S subunit in the 70S ribosome.

Functionally, located at the top of the head of the 30S subunit, it contacts several helices of the 16S rRNA. In the 70S ribosome it contacts the 23S rRNA (bridge B1a) and protein L5 of the 50S subunit (bridge B1b), connecting the 2 subunits; these bridges are implicated in subunit movement. Contacts the tRNAs in the A and P-sites. The polypeptide is Small ribosomal subunit protein uS13 (Thermobifida fusca (strain YX)).